Consider the following 881-residue polypeptide: Alanine--tRNA ligase (881 aa).

Zn(2+) is bound by residues H568, H572, C670, and H674.

It belongs to the class-II aminoacyl-tRNA synthetase family. Zn(2+) is required as a cofactor.

It is found in the cytoplasm. The enzyme catalyses tRNA(Ala) + L-alanine + ATP = L-alanyl-tRNA(Ala) + AMP + diphosphate. Its function is as follows. Catalyzes the attachment of alanine to tRNA(Ala) in a two-step reaction: alanine is first activated by ATP to form Ala-AMP and then transferred to the acceptor end of tRNA(Ala). Also edits incorrectly charged Ser-tRNA(Ala) and Gly-tRNA(Ala) via its editing domain. In Clostridium acetobutylicum (strain ATCC 824 / DSM 792 / JCM 1419 / IAM 19013 / LMG 5710 / NBRC 13948 / NRRL B-527 / VKM B-1787 / 2291 / W), this protein is Alanine--tRNA ligase.